The sequence spans 442 residues: UDP-N-acetylmuramoylalanine--D-glutamate ligase (442 aa).

113-119 is an ATP binding site; sequence GSNGKTT.

This sequence belongs to the MurCDEF family.

It is found in the cytoplasm. It carries out the reaction UDP-N-acetyl-alpha-D-muramoyl-L-alanine + D-glutamate + ATP = UDP-N-acetyl-alpha-D-muramoyl-L-alanyl-D-glutamate + ADP + phosphate + H(+). It participates in cell wall biogenesis; peptidoglycan biosynthesis. Its function is as follows. Cell wall formation. Catalyzes the addition of glutamate to the nucleotide precursor UDP-N-acetylmuramoyl-L-alanine (UMA). The protein is UDP-N-acetylmuramoylalanine--D-glutamate ligase of Coxiella burnetii (strain CbuG_Q212) (Coxiella burnetii (strain Q212)).